Here is a 383-residue protein sequence, read N- to C-terminus: Queuine tRNA-ribosyltransferase (383 aa).

Aspartate 89 (proton acceptor) is an active-site residue. Residues 89–93 (DSGGF), aspartate 143, glutamine 187, and glycine 214 contribute to the substrate site. The RNA binding stretch occupies residues 245 to 251 (GVGDLID). The active-site Nucleophile is aspartate 264. The RNA binding; important for wobble base 34 recognition stretch occupies residues 269–273 (TRNAR). Positions 302, 304, 307, and 333 each coordinate Zn(2+).

The protein belongs to the queuine tRNA-ribosyltransferase family. As to quaternary structure, homodimer. Within each dimer, one monomer is responsible for RNA recognition and catalysis, while the other monomer binds to the replacement base PreQ1. The cofactor is Zn(2+).

It carries out the reaction 7-aminomethyl-7-carbaguanine + guanosine(34) in tRNA = 7-aminomethyl-7-carbaguanosine(34) in tRNA + guanine. It functions in the pathway tRNA modification; tRNA-queuosine biosynthesis. In terms of biological role, catalyzes the base-exchange of a guanine (G) residue with the queuine precursor 7-aminomethyl-7-deazaguanine (PreQ1) at position 34 (anticodon wobble position) in tRNAs with GU(N) anticodons (tRNA-Asp, -Asn, -His and -Tyr). Catalysis occurs through a double-displacement mechanism. The nucleophile active site attacks the C1' of nucleotide 34 to detach the guanine base from the RNA, forming a covalent enzyme-RNA intermediate. The proton acceptor active site deprotonates the incoming PreQ1, allowing a nucleophilic attack on the C1' of the ribose to form the product. After dissociation, two additional enzymatic reactions on the tRNA convert PreQ1 to queuine (Q), resulting in the hypermodified nucleoside queuosine (7-(((4,5-cis-dihydroxy-2-cyclopenten-1-yl)amino)methyl)-7-deazaguanosine). This Thermodesulfovibrio yellowstonii (strain ATCC 51303 / DSM 11347 / YP87) protein is Queuine tRNA-ribosyltransferase.